A 446-amino-acid chain; its full sequence is Divalent metal cation transporter MntH (446 aa).

11 consecutive transmembrane segments (helical) span residues 32–52 (LAFL…GNWI), 59–79 (AQFG…AMLL), 107–127 (AIIF…AEVI), 139–159 (IPLI…LFIM), 168–188 (AIVG…VYIS), 205–225 (IIAN…TIMP), 264–284 (SIAF…FYGV), 303–323 (PVLG…ALLA), 355–375 (LVTR…FRGN), 381–401 (QLLV…LIPL), and 420–440 (VNIC…YLII).

It belongs to the NRAMP family.

The protein localises to the cell membrane. H(+)-stimulated, divalent metal cation uptake system. In Staphylococcus haemolyticus (strain JCSC1435), this protein is Divalent metal cation transporter MntH.